A 146-amino-acid chain; its full sequence is 16.0 kDa heat shock protein, peroxisomal (146 aa).

The 121-residue stretch at 23–143 (WASASATAAM…RPRTRPIAVS (121 aa)) folds into the sHSP domain. Positions 144–146 (SKL) match the Microbody targeting signal motif.

This sequence belongs to the small heat shock protein (HSP20) family. As to quaternary structure, may form oligomeric structures.

The protein resides in the peroxisome. This is 16.0 kDa heat shock protein, peroxisomal (HSP16.0) from Oryza sativa subsp. japonica (Rice).